We begin with the raw amino-acid sequence, 89 residues long: Small ribosomal subunit protein uS15 (89 aa).

Positions Met-1 to Asp-21 are enriched in basic and acidic residues. The tract at residues Met-1–Ser-24 is disordered.

Belongs to the universal ribosomal protein uS15 family. As to quaternary structure, part of the 30S ribosomal subunit. Forms a bridge to the 50S subunit in the 70S ribosome, contacting the 23S rRNA.

Functionally, one of the primary rRNA binding proteins, it binds directly to 16S rRNA where it helps nucleate assembly of the platform of the 30S subunit by binding and bridging several RNA helices of the 16S rRNA. In terms of biological role, forms an intersubunit bridge (bridge B4) with the 23S rRNA of the 50S subunit in the ribosome. The sequence is that of Small ribosomal subunit protein uS15 from Bacillus subtilis (strain 168).